The following is a 539-amino-acid chain: Putative cysteine ligase BshC (539 aa).

Positions 249 to 270 form a coiled coil; that stretch reads VETNDEVTNRLNESQAAMKRAG.

This sequence belongs to the BshC family.

Involved in bacillithiol (BSH) biosynthesis. May catalyze the last step of the pathway, the addition of cysteine to glucosamine malate (GlcN-Mal) to generate BSH. In Bacillus pumilus (strain SAFR-032), this protein is Putative cysteine ligase BshC.